We begin with the raw amino-acid sequence, 355 residues long: Vacuolar protein sorting-associated protein 37C (355 aa).

Position 29 is a phosphoserine (Ser-29). One can recognise a VPS37 C-terminal domain in the interval 78-167 (VERCQEQKAK…RKPRASQELA (90 aa)). The segment at 159 to 355 (KPRASQELAG…PPPGPAWPGY (197 aa)) is disordered. Pro residues-rich tracts occupy residues 170–186 (APPPRPPPPVRPVPQGT) and 194–205 (PQPPSAMPPYPL). Residues 246–257 (PAAQPGPRGAAG) show a composition bias toward low complexity. Pro residues predominate over residues 321-355 (PGQPQPSVPLQPPYPPGPAPPYGFPPPPGPAWPGY).

The protein belongs to the VPS37 family. Component of the ESCRT-I complex (endosomal sorting complex required for transport I) which consists of TSG101, VPS28, a VPS37 protein (VPS37A to -D) and MVB12A or MVB12B in a 1:1:1:1 stoichiometry. Interacts with TSG101, VPS28, MVB12A and MVB12B. Component of the ESCRT-I complex (endosomal sorting complex required for transport I) which consists of TSG101, VPS28, a VPS37 protein (VPS37A to -D) and UBAP1 in a 1:1:1:1 stoichiometry. Interacts with HGS and STAM2. Interacts with CEP55. In terms of processing, phosphorylated by TBK1.

The protein localises to the late endosome membrane. In terms of biological role, component of the ESCRT-I complex, a regulator of vesicular trafficking process. Required for the sorting of endocytic ubiquitinated cargos into multivesicular bodies. May be involved in cell growth and differentiation. This chain is Vacuolar protein sorting-associated protein 37C (VPS37C), found in Pongo abelii (Sumatran orangutan).